Reading from the N-terminus, the 154-residue chain is Myoglobin (154 aa).

Residues 2 to 148 (GLSDGEWQMV…FRNDIAAKYK (147 aa)) form the Globin domain. Residues serine 4 and serine 32 each carry the phosphoserine modification. Histidine 65 is a nitrite binding site. Histidine 65 contributes to the O2 binding site. Threonine 68 is modified (phosphothreonine). Residue histidine 94 participates in heme b binding. 2 positions are modified to phosphoserine: serine 121 and serine 133.

It belongs to the globin family. As to quaternary structure, monomeric.

The protein resides in the cytoplasm. Its subcellular location is the sarcoplasm. The enzyme catalyses Fe(III)-heme b-[protein] + nitric oxide + H2O = Fe(II)-heme b-[protein] + nitrite + 2 H(+). It catalyses the reaction H2O2 + AH2 = A + 2 H2O. Monomeric heme protein which primary function is to store oxygen and facilitate its diffusion within muscle tissues. Reversibly binds oxygen through a pentacoordinated heme iron and enables its timely and efficient release as needed during periods of heightened demand. Depending on the oxidative conditions of tissues and cells, and in addition to its ability to bind oxygen, it also has a nitrite reductase activity whereby it regulates the production of bioactive nitric oxide. Under stress conditions, like hypoxia and anoxia, it also protects cells against reactive oxygen species thanks to its pseudoperoxidase activity. The sequence is that of Myoglobin from Rattus norvegicus (Rat).